The primary structure comprises 90 residues: Small ribosomal subunit protein uS15c (90 aa).

Belongs to the universal ribosomal protein uS15 family. Part of the 30S ribosomal subunit.

The protein localises to the plastid. The protein resides in the chloroplast. The chain is Small ribosomal subunit protein uS15c (rps15) from Nandina domestica (Heavenly bamboo).